A 138-amino-acid chain; its full sequence is Large ribosomal subunit protein uL16 (138 aa).

This sequence belongs to the universal ribosomal protein uL16 family. As to quaternary structure, part of the 50S ribosomal subunit.

Binds 23S rRNA and is also seen to make contacts with the A and possibly P site tRNAs. This Corynebacterium kroppenstedtii (strain DSM 44385 / JCM 11950 / CIP 105744 / CCUG 35717) protein is Large ribosomal subunit protein uL16.